Consider the following 122-residue polypeptide: Large ribosomal subunit protein uL14 (122 aa).

This sequence belongs to the universal ribosomal protein uL14 family. In terms of assembly, part of the 50S ribosomal subunit. Forms a cluster with proteins L3 and L19. In the 70S ribosome, L14 and L19 interact and together make contacts with the 16S rRNA in bridges B5 and B8.

Functionally, binds to 23S rRNA. Forms part of two intersubunit bridges in the 70S ribosome. This chain is Large ribosomal subunit protein uL14, found in Streptococcus agalactiae serotype Ia (strain ATCC 27591 / A909 / CDC SS700).